We begin with the raw amino-acid sequence, 150 residues long: Peptidoglycan-associated lipoprotein (150 aa).

A signal peptide spans 1-19; the sequence is MKKLTKVLLVAGSVAVLAA. The N-palmitoyl cysteine moiety is linked to residue Cys-20. Residue Cys-20 is the site of S-diacylglycerol cysteine attachment. In terms of domain architecture, OmpA-like spans 37 to 150; the sequence is SVQDLQQRYN…SKNRRAVLAY (114 aa).

Belongs to the Pal lipoprotein family. As to quaternary structure, the Tol-Pal system is composed of five core proteins: the inner membrane proteins TolA, TolQ and TolR, the periplasmic protein TolB and the outer membrane protein Pal. They form a network linking the inner and outer membranes and the peptidoglycan layer.

It localises to the cell outer membrane. Its function is as follows. Part of the Tol-Pal system, which plays a role in outer membrane invagination during cell division and is important for maintaining outer membrane integrity. The polypeptide is Peptidoglycan-associated lipoprotein (Pasteurella multocida (strain Pm70)).